The chain runs to 502 residues: L-ornithine N(5)-monooxygenase (502 aa).

Positions 1 to 10 are enriched in basic and acidic residues; the sequence is MEPVERKLEI. Residues 1-34 are disordered; it reads MEPVERKLEIGSRSYSKMPLTQQRSSGEPPRLKA. A compositionally biased stretch (polar residues) spans 13 to 26; sequence RSYSKMPLTQQRSS. FAD-binding positions include 83-91 and Q102; that span reads ERQKQFAWH. Substrate is bound at residue K107. An FAD-binding site is contributed by V168. Residues 254 to 257 and R279 contribute to the NADP(+) site; that span reads SGQS. Residues 293–296 and N323 contribute to the substrate site; that span reads NEVF. 323–325 provides a ligand contact to NADP(+); the sequence is NYS. An FAD-binding site is contributed by 466 to 468; it reads SLL. Residue S469 participates in substrate binding.

It belongs to the lysine N(6)-hydroxylase/L-ornithine N(5)-oxygenase family. Homotetramer. It depends on FAD as a cofactor.

The enzyme catalyses L-ornithine + NADPH + O2 = N(5)-hydroxy-L-ornithine + NADP(+) + H2O. It carries out the reaction L-ornithine + NADH + O2 = N(5)-hydroxy-L-ornithine + NAD(+) + H2O. It participates in siderophore biosynthesis. Its function is as follows. Catalyzes the conversion of L-ornithine to N(5)-hydroxyornithine, the first step in the biosynthesis of all hydroxamate-containing siderophores, such as deferriferrichrysin. This Aspergillus oryzae (strain ATCC 42149 / RIB 40) (Yellow koji mold) protein is L-ornithine N(5)-monooxygenase.